Reading from the N-terminus, the 377-residue chain is Probable protein phosphatase 2C 7 (377 aa).

Disordered regions lie at residues 1–68 and 80–99; these read MAAH…GKAA and TTVA…EDDE. Residues 21 to 39 show a composition bias toward low complexity; sequence PPAAEAEAAAAAAAIARAA. A compositionally biased stretch (basic residues) spans 51-63; that stretch reads GVRHPLKHRRFRA. A compositionally biased stretch (low complexity) spans 80–89; the sequence is TTVAEATATG. Residues 115-361 enclose the PPM-type phosphatase domain; sequence SCGYSSFRGR…DNITCIVVKF (247 aa). Residues Asp151, Gly152, Asp313, and Asp352 each coordinate Mn(2+).

Belongs to the PP2C family. Mg(2+) is required as a cofactor. The cofactor is Mn(2+).

It catalyses the reaction O-phospho-L-seryl-[protein] + H2O = L-seryl-[protein] + phosphate. The enzyme catalyses O-phospho-L-threonyl-[protein] + H2O = L-threonyl-[protein] + phosphate. This is Probable protein phosphatase 2C 7 from Oryza sativa subsp. japonica (Rice).